The sequence spans 307 residues: tRNA pseudouridine synthase B (307 aa).

D41 (nucleophile) is an active-site residue.

It belongs to the pseudouridine synthase TruB family. Type 1 subfamily.

It carries out the reaction uridine(55) in tRNA = pseudouridine(55) in tRNA. Functionally, responsible for synthesis of pseudouridine from uracil-55 in the psi GC loop of transfer RNAs. The polypeptide is tRNA pseudouridine synthase B (Prochlorococcus marinus (strain AS9601)).